The following is a 386-amino-acid chain: MGSIGAASMEFCFDVFKELKVHHANENIFYCPIAIMSALAMVYLGAKDSTRTQINKVVRFDKLPGFGDSIEAQCGTSVNVHSSLRDILNQITKPNDVYSFSLASRLYAEERYPILPEYLQCVKELYRGGLEPINFQTAADQARELINSWVESQTNGIIRNVLQPSSVDSQTAMVLVNAIVFKGLWEKAFKDEDTQAMPFRVTEQESKPVQMMYQIGLFRVASMASEKMKILELPFASGTMSMLVLLPDEVSGLEQLESIINFEKLTEWTSSNVMEERKIKVYLPRMKMEEKYNLTSVLMAMGITDVFSSSANLSGISSAESLKISQAVHAAHAEINEAGREVVGSAEAGVDAASVSEEFRADHPFLFCIKHIATNAVLFFGRCVSP.

An N-acetylglycine modification is found at Gly-2. Positions 22–48 form a signal peptide, not cleaved; the sequence is HHANENIFYCPIAIMSALAMVYLGAKD. Ser-69 is modified (phosphoserine). The cysteines at positions 74 and 121 are disulfide-linked. Position 192 (Glu-192) interacts with Ca(2+). N-linked (GlcNAc...) asparagine glycosylation is present at Asn-293. Ser-345 is subject to Phosphoserine.

The protein belongs to the serpin family. Ov-serpin subfamily. As to quaternary structure, homodimer. Undergoes proteolytic cleavage first at the canonical P1-P1' site, and then at the P8-P7 site by subtilisin. In terms of tissue distribution, major protein of egg white. Expressed in the magnum of the oviduct (at protein level).

It localises to the secreted. Its function is as follows. Non-inhibitory serpin. Storage protein of egg white. The chain is Ovalbumin (SERPINB14) from Gallus gallus (Chicken).